The chain runs to 241 residues: Carboxy-S-adenosyl-L-methionine synthase (241 aa).

Residues Tyr-38, 63-65 (GCS), 88-89 (DN), 116-117 (DI), Asn-131, and Arg-198 contribute to the S-adenosyl-L-methionine site.

It belongs to the class I-like SAM-binding methyltransferase superfamily. Cx-SAM synthase family. Homodimer.

It catalyses the reaction prephenate + S-adenosyl-L-methionine = carboxy-S-adenosyl-L-methionine + 3-phenylpyruvate + H2O. Its function is as follows. Catalyzes the conversion of S-adenosyl-L-methionine (SAM) to carboxy-S-adenosyl-L-methionine (Cx-SAM). The polypeptide is Carboxy-S-adenosyl-L-methionine synthase (Histophilus somni (strain 2336) (Haemophilus somnus)).